Reading from the N-terminus, the 448-residue chain is Phosphoglucosamine mutase (448 aa).

The active-site Phosphoserine intermediate is Ser100. Residues Ser100, Asp240, Asp242, and Asp244 each coordinate Mg(2+). Ser100 is subject to Phosphoserine.

Belongs to the phosphohexose mutase family. Mg(2+) serves as cofactor. In terms of processing, activated by phosphorylation.

The catalysed reaction is alpha-D-glucosamine 1-phosphate = D-glucosamine 6-phosphate. Catalyzes the conversion of glucosamine-6-phosphate to glucosamine-1-phosphate. The chain is Phosphoglucosamine mutase from Clostridium beijerinckii (strain ATCC 51743 / NCIMB 8052) (Clostridium acetobutylicum).